Reading from the N-terminus, the 413-residue chain is Exodeoxyribonuclease I (413 aa).

The region spanning 12–193 (LFYDYETFGI…VSDVYATIEI (182 aa)) is the Exonuclease domain. Mg(2+) contacts are provided by aspartate 15, glutamate 17, and aspartate 186. Residue glutamate 17 coordinates substrate. The ExoI SH3-like domain maps to 202–349 (PRLFDFFFKI…QNIKIIFSKN (148 aa)). Positions 350 to 413 (NNTNQFFNVD…RYRARNFFIH (64 aa)) constitute an ExoI C-terminal domain.

Monomer. Interacts with ssb (via C-terminus); this interaction stimulates the exonuclease activity by recruiting the enzyme to its substrate. It depends on Mg(2+) as a cofactor.

It carries out the reaction Exonucleolytic cleavage in the 3'- to 5'-direction to yield nucleoside 5'-phosphates.. Its function is as follows. Degrades single-stranded DNA (ssDNA) in a highly processive manner. Also functions as a DNA deoxyribophosphodiesterase that releases deoxyribose-phosphate moieties following the cleavage of DNA at an apurinic/apyrimidinic (AP) site by either an AP endonuclease or AP lyase. In Buchnera aphidicola subsp. Acyrthosiphon pisum (strain APS) (Acyrthosiphon pisum symbiotic bacterium), this protein is Exodeoxyribonuclease I (sbcB).